Consider the following 684-residue polypeptide: Glycine--tRNA ligase beta subunit (684 aa).

Belongs to the class-II aminoacyl-tRNA synthetase family. In terms of assembly, tetramer of two alpha and two beta subunits.

It is found in the cytoplasm. It carries out the reaction tRNA(Gly) + glycine + ATP = glycyl-tRNA(Gly) + AMP + diphosphate. The chain is Glycine--tRNA ligase beta subunit from Pseudomonas syringae pv. syringae (strain B728a).